We begin with the raw amino-acid sequence, 327 residues long: DNA polymerase III subunit delta' (327 aa).

In terms of assembly, DNA polymerase III contains a core (composed of alpha, epsilon and theta chains) that associates with a tau subunit. This core dimerizes to form the POLIII' complex. PolIII' associates with the gamma complex (composed of gamma, delta, delta', psi and chi chains) and with the beta chain to form the complete DNA polymerase III complex.

The catalysed reaction is DNA(n) + a 2'-deoxyribonucleoside 5'-triphosphate = DNA(n+1) + diphosphate. DNA polymerase III is a complex, multichain enzyme responsible for most of the replicative synthesis in bacteria. This DNA polymerase also exhibits 3' to 5' exonuclease activity. The sequence is that of DNA polymerase III subunit delta' (holB) from Haemophilus influenzae (strain ATCC 51907 / DSM 11121 / KW20 / Rd).